Reading from the N-terminus, the 328-residue chain is Opticin (328 aa).

Positions 1 to 19 (MKFLAFLSLLSLVLQKAET) are cleaved as a signal peptide. A glycan (N-linked (GlcNAc...) asparagine) is linked at Asn46. Tyr69 carries the sulfotyrosine modification. N-linked (GlcNAc...) asparagine glycosylation is found at Asn80 and Asn101. The region spanning 112 to 149 (LLNSQSSHGLPTCLVCVCLGSSVYCDDADLENIPPLPQ) is the LRRNT domain. LRR repeat units lie at residues 150-171 (MTTY…DFKG), 174-195 (KLRR…ALRL), 198-219 (ALQD…PSGI), 244-265 (KLQF…LPLS), 266-286 (LRSL…TFCD), and 296-316 (QLED…PEAY). Cysteines 285 and 318 form a disulfide. N-linked (GlcNAc...) asparagine glycosylation is present at Asn308.

It belongs to the small leucine-rich proteoglycan (SLRP) family. SLRP class III subfamily. Homodimer. In terms of processing, O-glycosylated. Sulfated on tyrosine residues. Post-translationally, proteolytically cleaved by MMP1, MMP2, MMP3, MMP7, MMP8, MMP9, ADAMTS4, and ADAMTS5. Proteolytically cleaved by MMP13. As to expression, expressed in cartilage (at protein level). Expressed in the vitreous collagen, inner limiting membrane, lens capsule, trabecular meshwork, anterior surface of the iris, the area adjacent to the nonpigmented ciliary epithelium, and weakly expressed in the retina of the eye (at protein level). Expressed in the nonpigmented ciliary epithelium of the eye.

It localises to the secreted. Its subcellular location is the extracellular space. The protein resides in the extracellular matrix. In terms of biological role, inhibits angiogenesis in the vitreous humor of the eye, and therefore represses neovascularization. Binds collagen fibrils. May be involved in collagen fiber organization via regulation of other members of the small leucine-rich repeat proteoglycan superfamily. The protein is Opticin (Optc) of Mus musculus (Mouse).